A 359-amino-acid polypeptide reads, in one-letter code: Histamine H2 receptor (359 aa).

Residues 1 to 22 (MAPNGTASSFCLDSTACKITIT) lie on the Extracellular side of the membrane. A glycan (N-linked (GlcNAc...) asparagine) is linked at asparagine 4. Residues 23 to 44 (VVLAVLILITVAGNVVVCLAVG) traverse the membrane as a helical segment. Topologically, residues 45-57 (LNRRLRNLTNCFI) are cytoplasmic. A helical membrane pass occupies residues 58-81 (VSLAITDLLLGLLVLPFSAIYQLS). At 82–92 (CKWSFGKVFCN) the chain is on the extracellular side. A disulfide bond links cysteine 91 and cysteine 174. The chain crosses the membrane as a helical span at residues 93–114 (IYTSLDVMLCTASILNLFMISL). The Cytoplasmic portion of the chain corresponds to 115-134 (DRYCAVMDPLRYPVLVTPVR). The chain crosses the membrane as a helical span at residues 135-159 (VAISLVLIWVISITLSFLSIHLGWN). At 160–180 (SRNETSKGNHTTSKCKVQVNE) the chain is on the extracellular side. The helical transmembrane segment at 181-204 (VYGLVDGLVTFYLPLLIMCITYYR) threads the bilayer. The Cytoplasmic portion of the chain corresponds to 205–234 (IFKVARDQAKRINHISSWKAATIREHKATV). Residues 235 to 258 (TLAAVMGAFIICWFPYFTAFVYRG) form a helical membrane-spanning segment. Topologically, residues 259 to 267 (LRGDDAINE) are extracellular. Residues 268 to 289 (VLEAIVLWLGYANSALNPILYA) form a helical membrane-spanning segment. Topologically, residues 290–359 (ALNRDFRTGY…VTAPQGATDR (70 aa)) are cytoplasmic. Cysteine 305 carries the S-palmitoyl cysteine lipid modification. The disordered stretch occupies residues 316-340 (SLRSNASQLSRTQSREPRQQEEKPL). Positions 317–327 (LRSNASQLSRT) are enriched in polar residues. A compositionally biased stretch (basic and acidic residues) spans 328-340 (QSREPRQQEEKPL).

The protein belongs to the G-protein coupled receptor 1 family.

It is found in the cell membrane. Its function is as follows. The H2 subclass of histamine receptors mediates gastric acid secretion. Also appears to regulate gastrointestinal motility and intestinal secretion. Possible role in regulating cell growth and differentiation. The activity of this receptor is mediated by G proteins which activate adenylyl cyclase and, through a separate G protein-dependent mechanism, the phosphoinositide/protein kinase (PKC) signaling pathway. The sequence is that of Histamine H2 receptor (HRH2) from Gorilla gorilla gorilla (Western lowland gorilla).